A 177-amino-acid chain; its full sequence is MEQFRGTTIVCVRRNGRVALGGDGQVTLGNTVMKGNARKVRRLYGDKVLAGFAGGTADAFTLFERFEGKLEKYSGNLTRAAVELAKDWRTERALRRLEALLAVADKETSLLITGNGDVIEPEDNLIAMGSGGPFAQAAARALLDNTELSAREIAERALNIAADICIYTNRHLTIEEM.

Thr-7 is an active-site residue. Ala-162, Cys-165, and Thr-168 together coordinate Na(+).

This sequence belongs to the peptidase T1B family. HslV subfamily. As to quaternary structure, a double ring-shaped homohexamer of HslV is capped on each side by a ring-shaped HslU homohexamer. The assembly of the HslU/HslV complex is dependent on binding of ATP.

The protein resides in the cytoplasm. The catalysed reaction is ATP-dependent cleavage of peptide bonds with broad specificity.. Its activity is regulated as follows. Allosterically activated by HslU binding. Protease subunit of a proteasome-like degradation complex believed to be a general protein degrading machinery. The polypeptide is ATP-dependent protease subunit HslV (Thioalkalivibrio sulfidiphilus (strain HL-EbGR7)).